Reading from the N-terminus, the 434-residue chain is F-box only protein 15 (434 aa).

Residues 1-41 (MPSEILLKIFSYLDAVSLLCAGCVSRRFYHLANDNFIWIRI) enclose the F-box domain.

As to quaternary structure, directly interacts with SKP1 and CUL1.

In terms of biological role, substrate-recognition component of the SCF (SKP1-CUL1-F-box protein)-type E3 ubiquitin ligase complex. This is F-box only protein 15 (FBXO15) from Macaca fascicularis (Crab-eating macaque).